The primary structure comprises 311 residues: Pseudouridine-5'-phosphate glycosidase (311 aa).

Glu-32 acts as the Proton donor in catalysis. Residues Lys-96 and Val-116 each coordinate substrate. Position 148 (Asp-148) interacts with Mn(2+). Substrate is bound at residue 150–152 (SAD). The active-site Nucleophile is Lys-169.

It belongs to the pseudouridine-5'-phosphate glycosidase family. Homotrimer. It depends on Mn(2+) as a cofactor.

The enzyme catalyses D-ribose 5-phosphate + uracil = psi-UMP + H2O. In terms of biological role, catalyzes the reversible cleavage of pseudouridine 5'-phosphate (PsiMP) to ribose 5-phosphate and uracil. Functions biologically in the cleavage direction, as part of a pseudouridine degradation pathway. This chain is Pseudouridine-5'-phosphate glycosidase, found in Roseiflexus sp. (strain RS-1).